We begin with the raw amino-acid sequence, 118 residues long: Holo-[acyl-carrier-protein] synthase (118 aa).

Positions 8 and 58 each coordinate Mg(2+).

Belongs to the P-Pant transferase superfamily. AcpS family. It depends on Mg(2+) as a cofactor.

Its subcellular location is the cytoplasm. The catalysed reaction is apo-[ACP] + CoA = holo-[ACP] + adenosine 3',5'-bisphosphate + H(+). Its function is as follows. Transfers the 4'-phosphopantetheine moiety from coenzyme A to a Ser of acyl-carrier-protein. The protein is Holo-[acyl-carrier-protein] synthase of Streptococcus pyogenes serotype M5 (strain Manfredo).